The primary structure comprises 666 residues: Peptidase S41 family protein phomP1' (666 aa).

The signal sequence occupies residues 1–27; it reads MSSFLVQTAVVRLFLLGVVFWFPFALS. N-linked (GlcNAc...) asparagine glycosylation is found at Asn-70, Asn-214, and Asn-234. The interval 303 to 504 is peptidase S41 domain; sequence DVAVLQITSF…LLQAQGVRTV (202 aa). N-linked (GlcNAc...) asparagine glycans are attached at residues Asn-555 and Asn-612.

This sequence belongs to the peptidase S41A family.

It participates in mycotoxin biosynthesis. Peptidase S41 family protein; part of the gene cluster that mediates the biosynthesis of the phomopsins, a group of hexapeptide mycotoxins which infects lupins and causes lupinosis disease in livestock. Within the pathway, phomP1 and phomP1' are probably involved in the processing of the phomA and phomA' precursors. The pathway starts with the processing of the precursor phomA by several endopeptidases including kexin proteases as well as the cluster-specific S41 family peptidase phomP1 and the oligopeptidase phomG to produce 10 identical copies of the hexapeptide Tyr-Val-Ile-Pro-Ile-Asp. After being excised from the precursor peptide, the core peptides are cyclized and modified post-translationally by enzymes encoded within the gene cluster. The timing and order of proteolysis of the phomA precursor and PTMs are still unknown. Two tyrosinase-like enzymes, phomQ1 and phomQ2, catalyze the chlorination and hydroxylation of Tyr, respectively. PhomYb, is proposed to be involved in the construction of the macrocyclic structure. The other 4 ustYa family proteins may be involved in PTMs that generate the unique structure of phomopsin A. PhomYa is required for the hydroxylation of C-beta of Tyr. PhomYc, phomYd, and phomYe are responsible for the biosynthesis of 2,3-dehydroisoleucine (dIle), 2,3-dehydroaspartic acid (dAsp), and 3,4-dehydroproline (dPro), respectively. While dIle formation by phomYc is indispensable for the installation of dAsp by phomYd, the order of the other PTMs have not been elucidated yet. Most of the biosynthetic enzymes likely have broad substrate specificity, and thus, there might be a metabolic grid from a precursor to phomopsin A. The enzyme(s) responsible for the biosynthesis of 3,4-dehydrovaline (dVal) have also not been identified yet. Finally, phomM acts as an S-adenosylmethionine-dependent alpha-N-methyltransferase that catalyzes two successive N-methylation reactions, converting N-desmethyl-phomopsin A to phomopsin A and phomopsin A further to an N,N-dimethylated congener called phomopsin E. This Diaporthe leptostromiformis (Lupinosis disease fungus) protein is Peptidase S41 family protein phomP1'.